Consider the following 353-residue polypeptide: Holliday junction branch migration complex subunit RuvB (353 aa).

The large ATPase domain (RuvB-L) stretch occupies residues 1-182 (MPERLITPKG…FGIVQRLEFY (182 aa)). Residues isoleucine 21, arginine 22, glycine 63, lysine 66, threonine 67, threonine 68, 129–131 (EDF), arginine 172, tyrosine 182, and arginine 219 contribute to the ATP site. Mg(2+) is bound at residue threonine 67. The interval 183–253 (NVQDLTRIVQ…VADRALDLLD (71 aa)) is small ATPAse domain (RuvB-S). Positions 256–353 (VQGFDAQDRR…QEEGGGEGKL (98 aa)) are head domain (RuvB-H). DNA contacts are provided by arginine 292, arginine 311, and arginine 316.

This sequence belongs to the RuvB family. Homohexamer. Forms an RuvA(8)-RuvB(12)-Holliday junction (HJ) complex. HJ DNA is sandwiched between 2 RuvA tetramers; dsDNA enters through RuvA and exits via RuvB. An RuvB hexamer assembles on each DNA strand where it exits the tetramer. Each RuvB hexamer is contacted by two RuvA subunits (via domain III) on 2 adjacent RuvB subunits; this complex drives branch migration. In the full resolvosome a probable DNA-RuvA(4)-RuvB(12)-RuvC(2) complex forms which resolves the HJ.

The protein localises to the cytoplasm. It carries out the reaction ATP + H2O = ADP + phosphate + H(+). In terms of biological role, the RuvA-RuvB-RuvC complex processes Holliday junction (HJ) DNA during genetic recombination and DNA repair, while the RuvA-RuvB complex plays an important role in the rescue of blocked DNA replication forks via replication fork reversal (RFR). RuvA specifically binds to HJ cruciform DNA, conferring on it an open structure. The RuvB hexamer acts as an ATP-dependent pump, pulling dsDNA into and through the RuvAB complex. RuvB forms 2 homohexamers on either side of HJ DNA bound by 1 or 2 RuvA tetramers; 4 subunits per hexamer contact DNA at a time. Coordinated motions by a converter formed by DNA-disengaged RuvB subunits stimulates ATP hydrolysis and nucleotide exchange. Immobilization of the converter enables RuvB to convert the ATP-contained energy into a lever motion, pulling 2 nucleotides of DNA out of the RuvA tetramer per ATP hydrolyzed, thus driving DNA branch migration. The RuvB motors rotate together with the DNA substrate, which together with the progressing nucleotide cycle form the mechanistic basis for DNA recombination by continuous HJ branch migration. Branch migration allows RuvC to scan DNA until it finds its consensus sequence, where it cleaves and resolves cruciform DNA. The polypeptide is Holliday junction branch migration complex subunit RuvB (Thioalkalivibrio sulfidiphilus (strain HL-EbGR7)).